The chain runs to 355 residues: UDP-N-acetylglucosamine--N-acetylmuramyl-(pentapeptide) pyrophosphoryl-undecaprenol N-acetylglucosamine transferase (355 aa).

Residues 12–14, N124, R160, S192, I243, 262–267, and Q287 each bind UDP-N-acetyl-alpha-D-glucosamine; these read TGG and ALTVCE.

Belongs to the glycosyltransferase 28 family. MurG subfamily.

The protein resides in the cell inner membrane. The enzyme catalyses di-trans,octa-cis-undecaprenyl diphospho-N-acetyl-alpha-D-muramoyl-L-alanyl-D-glutamyl-meso-2,6-diaminopimeloyl-D-alanyl-D-alanine + UDP-N-acetyl-alpha-D-glucosamine = di-trans,octa-cis-undecaprenyl diphospho-[N-acetyl-alpha-D-glucosaminyl-(1-&gt;4)]-N-acetyl-alpha-D-muramoyl-L-alanyl-D-glutamyl-meso-2,6-diaminopimeloyl-D-alanyl-D-alanine + UDP + H(+). It participates in cell wall biogenesis; peptidoglycan biosynthesis. Its function is as follows. Cell wall formation. Catalyzes the transfer of a GlcNAc subunit on undecaprenyl-pyrophosphoryl-MurNAc-pentapeptide (lipid intermediate I) to form undecaprenyl-pyrophosphoryl-MurNAc-(pentapeptide)GlcNAc (lipid intermediate II). In Haemophilus ducreyi (strain 35000HP / ATCC 700724), this protein is UDP-N-acetylglucosamine--N-acetylmuramyl-(pentapeptide) pyrophosphoryl-undecaprenol N-acetylglucosamine transferase.